The chain runs to 390 residues: Cell division protein FtsZ (390 aa).

GTP contacts are provided by residues 20 to 24, 106 to 108, Glu137, Arg141, and Asp184; these read GGGNN and GTG.

This sequence belongs to the FtsZ family. As to quaternary structure, homodimer. Polymerizes to form a dynamic ring structure in a strictly GTP-dependent manner. Interacts directly with several other division proteins.

The protein resides in the cytoplasm. In terms of biological role, essential cell division protein that forms a contractile ring structure (Z ring) at the future cell division site. The regulation of the ring assembly controls the timing and the location of cell division. One of the functions of the FtsZ ring is to recruit other cell division proteins to the septum to produce a new cell wall between the dividing cells. Binds GTP and shows GTPase activity. This chain is Cell division protein FtsZ, found in Mycoplasmopsis pulmonis (strain UAB CTIP) (Mycoplasma pulmonis).